A 62-amino-acid polypeptide reads, in one-letter code: Photosystem II reaction center protein Z (62 aa).

Transmembrane regions (helical) follow at residues 8 to 28 and 41 to 61; these read TLFAFVGLSFLLVVGVPVVFA and FSGIGFWFLLVFAVGILNSFV.

It belongs to the PsbZ family. PSII is composed of 1 copy each of membrane proteins PsbA, PsbB, PsbC, PsbD, PsbE, PsbF, PsbH, PsbI, PsbJ, PsbK, PsbL, PsbM, PsbT, PsbY, PsbZ, Psb30/Ycf12, at least 3 peripheral proteins of the oxygen-evolving complex and a large number of cofactors. It forms dimeric complexes.

Its subcellular location is the plastid. The protein localises to the chloroplast thylakoid membrane. In terms of biological role, may control the interaction of photosystem II (PSII) cores with the light-harvesting antenna, regulates electron flow through the 2 photosystem reaction centers. PSII is a light-driven water plastoquinone oxidoreductase, using light energy to abstract electrons from H(2)O, generating a proton gradient subsequently used for ATP formation. This is Photosystem II reaction center protein Z from Tupiella akineta (Green alga).